The primary structure comprises 161 residues: Large ribosomal subunit protein bL17 (161 aa).

A disordered region spans residues 126–161; the sequence is TAAKKAPKTRRSRKKATASVAEAPTAEAASEEKAAE. Residues 130–141 show a composition bias toward basic residues; the sequence is KAPKTRRSRKKA. The span at 142–153 shows a compositional bias: low complexity; that stretch reads TASVAEAPTAEA.

Belongs to the bacterial ribosomal protein bL17 family. In terms of assembly, part of the 50S ribosomal subunit. Contacts protein L32.

This Parabacteroides distasonis (strain ATCC 8503 / DSM 20701 / CIP 104284 / JCM 5825 / NCTC 11152) protein is Large ribosomal subunit protein bL17.